The following is a 353-amino-acid chain: Photosystem II protein D1 (353 aa).

Position 2 is an N-acetylthreonine (Thr-2). Thr-2 carries the phosphothreonine modification. 3 consecutive transmembrane segments (helical) span residues Tyr-29–Ser-46, His-118–Leu-133, and Trp-142–Ala-156. His-118 provides a ligand contact to chlorophyll a. Tyr-126 contacts pheophytin a. The [CaMn4O5] cluster site is built by Asp-170 and Glu-189. Residues Phe-197–Leu-218 traverse the membrane as a helical segment. Chlorophyll a is bound at residue His-198. Residues His-215 and Ser-264–Phe-265 each bind a quinone. His-215 lines the Fe cation pocket. His-272 serves as a coordination point for Fe cation. The helical transmembrane segment at Phe-274 to Leu-288 threads the bilayer. [CaMn4O5] cluster is bound by residues His-332, Glu-333, Asp-342, and Ala-344. A propeptide spanning residues Ala-345–Gly-353 is cleaved from the precursor.

Belongs to the reaction center PufL/M/PsbA/D family. PSII is composed of 1 copy each of membrane proteins PsbA, PsbB, PsbC, PsbD, PsbE, PsbF, PsbH, PsbI, PsbJ, PsbK, PsbL, PsbM, PsbT, PsbX, PsbY, PsbZ, Psb30/Ycf12, at least 3 peripheral proteins of the oxygen-evolving complex and a large number of cofactors. It forms dimeric complexes. The cofactor is The D1/D2 heterodimer binds P680, chlorophylls that are the primary electron donor of PSII, and subsequent electron acceptors. It shares a non-heme iron and each subunit binds pheophytin, quinone, additional chlorophylls, carotenoids and lipids. D1 provides most of the ligands for the Mn4-Ca-O5 cluster of the oxygen-evolving complex (OEC). There is also a Cl(-1) ion associated with D1 and D2, which is required for oxygen evolution. The PSII complex binds additional chlorophylls, carotenoids and specific lipids.. In terms of processing, tyr-161 forms a radical intermediate that is referred to as redox-active TyrZ, YZ or Y-Z. Post-translationally, C-terminally processed by CTPA; processing is essential to allow assembly of the oxygen-evolving complex and thus photosynthetic growth.

It localises to the plastid. The protein localises to the chloroplast thylakoid membrane. It catalyses the reaction 2 a plastoquinone + 4 hnu + 2 H2O = 2 a plastoquinol + O2. In terms of biological role, photosystem II (PSII) is a light-driven water:plastoquinone oxidoreductase that uses light energy to abstract electrons from H(2)O, generating O(2) and a proton gradient subsequently used for ATP formation. It consists of a core antenna complex that captures photons, and an electron transfer chain that converts photonic excitation into a charge separation. The D1/D2 (PsbA/PsbD) reaction center heterodimer binds P680, the primary electron donor of PSII as well as several subsequent electron acceptors. This Coffea arabica (Arabian coffee) protein is Photosystem II protein D1.